A 503-amino-acid polypeptide reads, in one-letter code: Cytochrome P450 3A43 (503 aa).

Cys-442 lines the heme pocket.

This sequence belongs to the cytochrome P450 family. Heme is required as a cofactor. In terms of tissue distribution, highest expression level in prostate. Also expressed in liver, kidney, pancreas, fetal liver and fetal skeletal muscle.

The protein localises to the endoplasmic reticulum membrane. It localises to the microsome membrane. The enzyme catalyses an organic molecule + reduced [NADPH--hemoprotein reductase] + O2 = an alcohol + oxidized [NADPH--hemoprotein reductase] + H2O + H(+). In terms of biological role, exhibits low testosterone 6-beta-hydroxylase activity. The polypeptide is Cytochrome P450 3A43 (CYP3A43) (Homo sapiens (Human)).